Reading from the N-terminus, the 747-residue chain is H(+)/Cl(-) exchange transporter 4 (747 aa).

The tract at residues 1–50 is required for localization in the endoplasmic reticulum; sequence MDFLEEPFPDVGTYEDFHTIDWLREKSRDTDRHRKITSKSKESIWEFIKS. Over 1 to 54 the chain is Cytoplasmic; sequence MDFLEEPFPDVGTYEDFHTIDWLREKSRDTDRHRKITSKSKESIWEFIKSLLDA. 2 helical membrane passes run 55 to 92 and 138 to 161; these read WSGW…VCLS and LNYL…VRVF. The short motif at 167–171 is the Selectivity filter part_1 element; it reads GSGIP. Ser168 provides a ligand contact to chloride. Residues 170 to 177 constitute an intramembrane region (helical); it reads IPEIKTIL. The next 2 helical transmembrane spans lie at 187–205 and 211–230; these read GKWT…VSSG and EGPL…SLFS. The Selectivity filter part_2 signature appears at 209–213; the sequence is GKEGP. 2 consecutive intramembrane regions (helical) follow at residues 242-254 and 258-266; these read VLSA…VSVA and PIGGVLFSL. The next 5 helical transmembrane spans lie at 278-296, 320-345, 352-372, 429-449, and 454-473; these read LWRS…RSIN, FPFI…AWCR, LGRY…IVAY, MWQL…TFGM, and GLFI…VGIG. The short motif at 454-458 is the Selectivity filter part_3 element; the sequence is GLFIP. Phe456 is a binding site for chloride. Intramembrane regions (helical) lie at residues 501–515 and 519–530; these read GLYA…LGGV and TVSLVVIMFELT. An intramembrane region (note=Loop between two helices) is located at residues 531–534; the sequence is GGLE. Residues 535 to 553 form a helical membrane-spanning segment; that stretch reads YIVPLMAAAVTSKWVADAF. Residues 554–747 lie on the Cytoplasmic side of the membrane; sequence GKEGIYEAHI…NQDPESIMFN (194 aa). Tyr559 serves as a coordination point for chloride. CBS domains are found at residues 587–653 and 680–742; these read MRPR…QRQE and LRRI…QDPE. ATP contacts are provided by residues Ser597 and 618–620; that span reads YNG. The segment at 654-683 is required for localization in the endoplasmic reticulum; it reads GIVSNSIMYFTEEPPELPANSPHPLKLRRI. 725 to 728 is an ATP binding site; the sequence is TKKD.

This sequence belongs to the chloride channel (TC 2.A.49) family. ClC-4/CLCN4 subfamily. Predominantly present in excitable tissues such as nervous system and skeletal muscle. Not detected in heart.

The protein localises to the early endosome membrane. It is found in the late endosome membrane. The protein resides in the endoplasmic reticulum membrane. Its subcellular location is the lysosome membrane. It localises to the recycling endosome membrane. Functionally, strongly outwardly rectifying, electrogenic H(+)/Cl(-)exchanger which mediates the exchange of chloride ions against protons. The CLC channel family contains both chloride channels and proton-coupled anion transporters that exchange chloride or another anion for protons. The presence of conserved gating glutamate residues is typical for family members that function as antiporters. In Mus musculus (Mouse), this protein is H(+)/Cl(-) exchange transporter 4 (Clcn4).